A 222-amino-acid chain; its full sequence is Alpha-S2-casein (222 aa).

The first 15 residues, 1-15 (MKFFIFTCLLAVALA), serve as a signal peptide directing secretion. Ser-23, Ser-24, Ser-25, Ser-28, Ser-46, Ser-71, Ser-72, Ser-73, Ser-76, Ser-144, Ser-146, Ser-150, and Ser-158 each carry phosphoserine. Residues 76-140 (SAEVATEEVK…AVPITPTLNR (65 aa)) constitute a repeat. Residues 158–222 (STEVFTKKTK…TKVIPYVRYL (65 aa)) constitute a repeat.

Belongs to the alpha-casein family. Mammary gland specific. Secreted in milk.

It localises to the secreted. Functionally, important role in the capacity of milk to transport calcium phosphate. In terms of biological role, casocidin-I inhibits the growth of E.coli and S.carnosus. This Bos taurus (Bovine) protein is Alpha-S2-casein (CSN1S2).